A 312-amino-acid chain; its full sequence is Methionyl-tRNA formyltransferase (312 aa).

109 to 112 (SLLP) contributes to the (6S)-5,6,7,8-tetrahydrofolate binding site.

Belongs to the Fmt family.

It carries out the reaction L-methionyl-tRNA(fMet) + (6R)-10-formyltetrahydrofolate = N-formyl-L-methionyl-tRNA(fMet) + (6S)-5,6,7,8-tetrahydrofolate + H(+). Attaches a formyl group to the free amino group of methionyl-tRNA(fMet). The formyl group appears to play a dual role in the initiator identity of N-formylmethionyl-tRNA by promoting its recognition by IF2 and preventing the misappropriation of this tRNA by the elongation apparatus. This is Methionyl-tRNA formyltransferase from Geotalea daltonii (strain DSM 22248 / JCM 15807 / FRC-32) (Geobacter daltonii).